Consider the following 295-residue polypeptide: Serpentine receptor class gamma-53 (295 aa).

The next 6 membrane-spanning stretches (helical) occupy residues Ile-7–Ser-27, Val-39–Phe-61, Phe-121–Tyr-141, Cys-173–Val-193, Met-211–Thr-230, and Ile-241–Ile-261.

This sequence belongs to the nematode receptor-like protein srg family.

The protein localises to the membrane. This chain is Serpentine receptor class gamma-53 (srg-53), found in Caenorhabditis elegans.